The following is a 251-amino-acid chain: 2,3-bisphosphoglycerate-dependent phosphoglycerate mutase (251 aa).

Residues 8-15, 21-22, Arg-60, 87-90, Lys-98, 114-115, and 183-184 each bind substrate; these read RHGESLWN, TG, ERHY, RR, and GN. His-9 serves as the catalytic Tele-phosphohistidine intermediate. Glu-87 serves as the catalytic Proton donor/acceptor.

It belongs to the phosphoglycerate mutase family. BPG-dependent PGAM subfamily.

The enzyme catalyses (2R)-2-phosphoglycerate = (2R)-3-phosphoglycerate. It participates in carbohydrate degradation; glycolysis; pyruvate from D-glyceraldehyde 3-phosphate: step 3/5. In terms of biological role, catalyzes the interconversion of 2-phosphoglycerate and 3-phosphoglycerate. This Thermoanaerobacter sp. (strain X514) protein is 2,3-bisphosphoglycerate-dependent phosphoglycerate mutase.